The primary structure comprises 211 residues: Ferric nitrobindin-like protein (211 aa).

Residues 21–27 (GRWRGPG) carry the GXWXGXG motif. Positions 104 to 130 (GVVQEGSDTRTEPGGAEPDPAGRRAPS) are disordered.

This sequence belongs to the nitrobindin family.

In Beutenbergia cavernae (strain ATCC BAA-8 / DSM 12333 / CCUG 43141 / JCM 11478 / NBRC 16432 / NCIMB 13614 / HKI 0122), this protein is Ferric nitrobindin-like protein.